The sequence spans 317 residues: Transaldolase 1 (317 aa).

The Schiff-base intermediate with substrate role is filled by K132.

Belongs to the transaldolase family. Type 1 subfamily. In terms of assembly, homodimer.

It localises to the cytoplasm. The catalysed reaction is D-sedoheptulose 7-phosphate + D-glyceraldehyde 3-phosphate = D-erythrose 4-phosphate + beta-D-fructose 6-phosphate. It participates in carbohydrate degradation; pentose phosphate pathway; D-glyceraldehyde 3-phosphate and beta-D-fructose 6-phosphate from D-ribose 5-phosphate and D-xylulose 5-phosphate (non-oxidative stage): step 2/3. Functionally, transaldolase is important for the balance of metabolites in the pentose-phosphate pathway. The chain is Transaldolase 1 from Shigella sonnei (strain Ss046).